We begin with the raw amino-acid sequence, 504 residues long: Topoisomerase I damage affected protein 11 (504 aa).

The disordered stretch occupies residues 32–62 (RKTGRKIRSASSNGYRLEHHRTSSAGSMHSQ). Residues 179-231 (ALLQSLATKELELLECKQKIEDLKKQTQHEEQNYTRRARELHELKEQVSKHLD) are a coiled coil. Thr-236 carries the post-translational modification Phosphothreonine. A phosphoserine mark is found at Ser-244 and Ser-286. Disordered stretches follow at residues 252 to 306 (LESR…SKQS), 332 to 377 (WDDS…SVSR), and 400 to 504 (DVIT…MTDF). Positions 257 to 287 (ENAGNSSLPSSVSKPKNMGHQSTNQSRSVSP) are enriched in polar residues. The segment covering 290–301 (IQERRQRDDSSD) has biased composition (basic and acidic residues). Polar residues-rich tracts occupy residues 332–359 (WDDS…QQYD) and 368–377 (KSPSQGSVSR). The span at 403-421 (TDNRCDPVYKSDRQHEQKK) shows a compositional bias: basic and acidic residues. Basic residues predominate over residues 470 to 479 (TREKKSKRSS). Positions 491-504 (DNSSVKNSVEMTDF) are enriched in polar residues.

It belongs to the TDA11 family.

The protein resides in the cytoplasm. This chain is Topoisomerase I damage affected protein 11 (TDA11), found in Saccharomyces cerevisiae (strain Lalvin EC1118 / Prise de mousse) (Baker's yeast).